The primary structure comprises 391 residues: MTIQTDGKTDVLWFLPTHGDGRYLGASEGARDVSLPYLRQIAQAADDLGYYGVLLPTGRSCEDSWVVASALAPLTQRLRFLVAVRPGLQEPSMAARMAATLDRISDGRLLINVVTGGDPVELKGDGVFLDHDERYVVTDEFLHIWRGLMAGETVNFEGKHLRSENGRVIFRPVQAPYPPLYFGGSSPAGIEVAAEHCEVYLTWGEPPAGVAEKIAKAREAAERKGKTFSYGIRLHVIVRETESEAWEAADRLISRLDDATIAQAQATLKRQDSVGQSRMMALHGGDRNKLVVSPNLWAGVGLVRGGAGTALVGSADQVADRMKEYIDLGIDRFILSGYPHLEEAYRFAELVFPKLPLRATTGTAPSTARNNGPFGEVIANDIVPTRRVSAH.

Belongs to the SsuD family.

It carries out the reaction an alkanesulfonate + FMNH2 + O2 = an aldehyde + FMN + sulfite + H2O + 2 H(+). Its function is as follows. Catalyzes the desulfonation of aliphatic sulfonates. This Methylorubrum extorquens (strain CM4 / NCIMB 13688) (Methylobacterium extorquens) protein is Alkanesulfonate monooxygenase.